A 279-amino-acid chain; its full sequence is Tryptophan synthase alpha chain (279 aa).

Active-site proton acceptor residues include E50 and D61.

It belongs to the TrpA family. In terms of assembly, tetramer of two alpha and two beta chains.

The catalysed reaction is (1S,2R)-1-C-(indol-3-yl)glycerol 3-phosphate + L-serine = D-glyceraldehyde 3-phosphate + L-tryptophan + H2O. It functions in the pathway amino-acid biosynthesis; L-tryptophan biosynthesis; L-tryptophan from chorismate: step 5/5. Functionally, the alpha subunit is responsible for the aldol cleavage of indoleglycerol phosphate to indole and glyceraldehyde 3-phosphate. This Brucella melitensis biotype 1 (strain ATCC 23456 / CCUG 17765 / NCTC 10094 / 16M) protein is Tryptophan synthase alpha chain.